Here is a 654-residue protein sequence, read N- to C-terminus: Pyoverdine export ATP-binding/permease protein PvdT (654 aa).

In terms of domain architecture, ABC transporter spans 6-245 (IELCDIRKAY…AHKGIQAEEL (240 aa)). An ATP-binding site is contributed by 43–50 (GASGSGKS). Transmembrane regions (helical) follow at residues 282 to 302 (ALTL…LAVG), 529 to 549 (LSLM…IGVM), 584 to 604 (AIML…VVGA), and 614 to 634 (AFAL…GVVF).

This sequence belongs to the ABC transporter superfamily. Macrolide exporter (TC 3.A.1.122) family. Part of the tripartite efflux system PvdRT-OpmQ, which is composed of an inner membrane component with both ATPase and permease domains, PvdT, a periplasmic membrane fusion protein, PvdR, and an outer membrane component, OpmQ.

It is found in the cell inner membrane. With respect to regulation, has a basal ATPase activity that is stimulated by PvdR. In vitro, interaction with PVD influences the affinity of PvdT to PvdR. Part of the tripartite efflux system PvdRT-OpmQ required for the secretion into the extracellular milieu of the siderophore pyoverdine (PVD), which is involved in iron acquisition. This subunit binds PVD and drives its secretion by hydrolyzing ATP. The system is responsible for export of newly synthesized PVD after the final steps of biosynthesis have taken place in the periplasm. It is also responsible for recycling of PVD after internalization of ferri-PVD into the periplasm by the outer-membrane receptor FpvA and release of iron from PVD, thus making PVD available for new cycles of iron uptake. Contributes to resistance against ampicillin. This Pseudomonas putida (strain ATCC 47054 / DSM 6125 / CFBP 8728 / NCIMB 11950 / KT2440) protein is Pyoverdine export ATP-binding/permease protein PvdT.